The following is a 341-amino-acid chain: MSTTADKIAVLGAGSWGTALASLLARHGHPTVLWGRDAAVVEAIDQRHENPRYLPGIPLPDSLRATTDLASAVEGAAWILVVTPSHAFGETVRALAPLRPAGAGVAWATKGFEPGSGRFLHEVAREVLGEDVPLAVVTGPSFAKEVTQGLPTAITVHGDVPEFAQMVAEAMHGPAFRAYTGDDMVGAELGGAMKNVLAVATGVADGMQLGLNARAGLITRGLNEMLRLAAAIGAKPETLMGLAGLGDLVLTCTGDLSRNRRLGLALGRGQTLQDAVREIGQVVESVQTADEVMRQARRHGIDLPISDRVRAVLHGEQTPEEGLRALLAREQKPEYPDTLFK.

NADPH contacts are provided by serine 15, tryptophan 16, arginine 36, and lysine 110. Residues lysine 110, glycine 139, and serine 141 each coordinate sn-glycerol 3-phosphate. Alanine 143 serves as a coordination point for NADPH. Sn-glycerol 3-phosphate contacts are provided by lysine 194, aspartate 247, serine 257, arginine 258, and asparagine 259. The Proton acceptor role is filled by lysine 194. Residue arginine 258 participates in NADPH binding. NADPH is bound by residues valine 282 and glutamate 284.

This sequence belongs to the NAD-dependent glycerol-3-phosphate dehydrogenase family.

It is found in the cytoplasm. It carries out the reaction sn-glycerol 3-phosphate + NAD(+) = dihydroxyacetone phosphate + NADH + H(+). It catalyses the reaction sn-glycerol 3-phosphate + NADP(+) = dihydroxyacetone phosphate + NADPH + H(+). It participates in membrane lipid metabolism; glycerophospholipid metabolism. Functionally, catalyzes the reduction of the glycolytic intermediate dihydroxyacetone phosphate (DHAP) to sn-glycerol 3-phosphate (G3P), the key precursor for phospholipid synthesis. The polypeptide is Glycerol-3-phosphate dehydrogenase [NAD(P)+] (Stenotrophomonas maltophilia (strain K279a)).